Consider the following 220-residue polypeptide: Coat protein TP4 (220 aa).

Its subcellular location is the virion. In Thermoproteus tenax (TTV1), this protein is Coat protein TP4.